We begin with the raw amino-acid sequence, 209 residues long: MTLPANQSPEMVILCNELGEATGTAPKSEIHHSDTPLHLAFSVYIFNGDNKLLVTRRASDKITWPGVLSNSCCGHPQPGEPLTEAIERRVHEELRIRADDIRLVLPEFSYRASMTNGITENELCPVFAAHCKTSGVNPDLNEVSAWEWVHWQWFFESVQAERLLVSPWCRAQVDLLAPLGANPSQWPVAEERRLPKAARTKIDVQLKVS.

Mn(2+)-binding residues include His31 and His38. Residues Pro36 to Ala171 enclose the Nudix hydrolase domain. Cys73 is an active-site residue. Residue Cys73 participates in Mg(2+) binding. Residue His75 participates in Mn(2+) binding. Position 93 (Glu93) interacts with Mg(2+). Glu120 and Glu122 together coordinate Mn(2+). The active site involves Glu122.

The protein belongs to the IPP isomerase type 1 family. Mg(2+) is required as a cofactor. Requires Mn(2+) as cofactor.

Its subcellular location is the cytoplasm. It catalyses the reaction isopentenyl diphosphate = dimethylallyl diphosphate. The protein operates within isoprenoid biosynthesis; dimethylallyl diphosphate biosynthesis; dimethylallyl diphosphate from isopentenyl diphosphate: step 1/1. In terms of biological role, catalyzes the 1,3-allylic rearrangement of the homoallylic substrate isopentenyl (IPP) to its highly electrophilic allylic isomer, dimethylallyl diphosphate (DMAPP). The chain is Isopentenyl-diphosphate Delta-isomerase from Rhizobium rhizogenes (Agrobacterium rhizogenes).